Reading from the N-terminus, the 2185-residue chain is Genome polyprotein (2185 aa).

Gly-2 carries N-myristoyl glycine; by host lipidation. Topologically, residues 2–1495 (GAQVSTQKTG…HVSRAFICLQ (1494 aa)) are cytoplasmic. The tract at residues 568–584 (FFQGPVEDAITAAIGRV) is amphipathic alpha-helix. Catalysis depends on for protease 2A activity residues His-872 and Asp-890. Residues Cys-907 and Cys-909 each coordinate Zn(2+). Cys-961 serves as the catalytic For protease 2A activity. Zn(2+) is bound by residues Cys-967 and His-969. A membrane-binding region spans residues 1101–1173 (NNGWLKKFTE…EQSAPSQSDQ (73 aa)). Residues 1101–1239 (NNGWLKKFTE…SPGAGKSVAT (139 aa)) are oligomerization. Residues 1122–1126 (AIKIQ) are RNA-binding. The SF3 helicase domain occupies 1205-1361 (EKKMSNYIQF…SMYSQNGKIN (157 aa)). Cys-1369, Cys-1381, and Cys-1386 together coordinate Zn(2+). The segment at 1369 to 1386 (CDEECCPVNFKKCCPLVC) adopts a C4-type; degenerate zinc-finger fold. Residues 1413–1420 (EYNHRHSV) are RNA-binding. The oligomerization stretch occupies residues 1424–1429 (LEALFQ). An intramembrane segment occupies 1496 to 1511 (AITTFVSVAGIIYIIY). Topologically, residues 1512 to 2185 (KLFAGFQGAY…TIRRKWLDSF (674 aa)) are cytoplasmic. Tyr-1521 is subject to O-(5'-phospho-RNA)-tyrosine. Residues 1541 to 1719 (GPAFEFAVAM…FSAALLKHYF (179 aa)) enclose the Peptidase C3 domain. Catalysis depends on for protease 3C activity residues His-1580, Glu-1611, and Cys-1687. The 117-residue stretch at 1950 to 2066 (GHLIAFDYSG…SYPWPIDASL (117 aa)) folds into the RdRp catalytic domain. Residues Asp-1956 and Asp-2052 each contribute to the Mg(2+) site.

The protein belongs to the picornaviruses polyprotein family. Interacts with capsid protein VP1 and capsid protein VP3 to form heterotrimeric protomers. As to quaternary structure, interacts with capsid protein VP0, and capsid protein VP3 to form heterotrimeric protomers. Five protomers subsequently associate to form pentamers which serve as building blocks for the capsid. Interacts with capsid protein VP2, capsid protein VP3 and capsid protein VP4 following cleavage of capsid protein VP0. Interacts with host CD55. Interacts with host CXADR. In terms of assembly, interacts with capsid protein VP1 and capsid protein VP3 in the mature capsid. Interacts with capsid protein VP0 and capsid protein VP1 to form heterotrimeric protomers. Five protomers subsequently associate to form pentamers which serve as building blocks for the capsid. Interacts with capsid protein VP4 in the mature capsid. Interacts with protein 2C; this interaction may be important for virion morphogenesis. As to quaternary structure, interacts with capsid protein VP1 and capsid protein VP3. In terms of assembly, homodimer. Homohexamer; forms a hexameric ring structure with 6-fold symmetry characteristic of AAA+ ATPases. Interacts (via N-terminus) with host RTN3 (via reticulon domain); this interaction is important for viral replication. Interacts with capsid protein VP3; this interaction may be important for virion morphogenesis. As to quaternary structure, interacts with protein 3CD. In terms of assembly, homodimer. Interacts with host GBF1. Interacts (via GOLD domain) with host ACBD3 (via GOLD domain); this interaction allows the formation of a viral protein 3A/ACBD3 heterotetramer with a 2:2 stoichiometry, which will stimulate the recruitment of host PI4KB in order to synthesize PI4P at the viral RNA replication sites. Interacts with RNA-directed RNA polymerase. As to quaternary structure, interacts with host TICAM1 (via C-terminus). In terms of assembly, interacts with protein 3AB and with RNA-directed RNA polymerase. Interacts with Viral protein genome-linked and with protein 3CD. The cofactor is Mg(2+). Post-translationally, specific enzymatic cleavages in vivo by the viral proteases yield processing intermediates and the mature proteins. In terms of processing, myristoylation is required for the formation of pentamers during virus assembly. Further assembly of 12 pentamers and a molecule of genomic RNA generates the provirion. During virion maturation, immature virions are rendered infectious following cleavage of VP0 into VP4 and VP2. This maturation seems to be an autocatalytic event triggered by the presence of RNA in the capsid and it is followed by a conformational change infectious virion. Post-translationally, myristoylation is required during RNA encapsidation and formation of the mature virus particle. In terms of processing, VPg is uridylylated by the polymerase into VPg-pUpU. This acts as a nucleotide-peptide primer for the genomic RNA replication.

The protein resides in the virion. The protein localises to the host cytoplasm. It is found in the host cytoplasmic vesicle membrane. Its subcellular location is the host nucleus. The catalysed reaction is a ribonucleoside 5'-triphosphate + H2O = a ribonucleoside 5'-diphosphate + phosphate + H(+). The enzyme catalyses Selective cleavage of Tyr-|-Gly bond in the picornavirus polyprotein.. It catalyses the reaction RNA(n) + a ribonucleoside 5'-triphosphate = RNA(n+1) + diphosphate. It carries out the reaction Selective cleavage of Gln-|-Gly bond in the poliovirus polyprotein. In other picornavirus reactions Glu may be substituted for Gln, and Ser or Thr for Gly.. Its activity is regulated as follows. Replication or transcription is subject to high level of random mutations by the nucleotide analog ribavirin. Its function is as follows. Forms an icosahedral capsid of pseudo T=3 symmetry with capsid proteins VP2 and VP3. The capsid is 300 Angstroms in diameter, composed of 60 copies of each capsid protein and enclosing the viral positive strand RNA genome. Capsid protein VP1 mainly forms the vertices of the capsid. Capsid protein VP1 interacts with host cell receptors CD55 and CXADR to provide virion attachment to target host cells. This attachment induces virion internalization. Tyrosine kinases are probably involved in the entry process. After binding to its receptor, the capsid undergoes conformational changes. Capsid protein VP1 N-terminus (that contains an amphipathic alpha-helix) and capsid protein VP4 are externalized. Together, they shape a pore in the host membrane through which viral genome is translocated to host cell cytoplasm. Forms an icosahedral capsid of pseudo T=3 symmetry with capsid proteins VP2 and VP3. The capsid is 300 Angstroms in diameter, composed of 60 copies of each capsid protein and enclosing the viral positive strand RNA genome. In terms of biological role, lies on the inner surface of the capsid shell. After binding to the host receptor, the capsid undergoes conformational changes. Capsid protein VP4 is released, Capsid protein VP1 N-terminus is externalized, and together, they shape a pore in the host membrane through which the viral genome is translocated into the host cell cytoplasm. Functionally, component of immature procapsids, which is cleaved into capsid proteins VP4 and VP2 after maturation. Allows the capsid to remain inactive before the maturation step. Its function is as follows. Cysteine protease that cleaves viral polyprotein and specific host proteins. It is responsible for the autocatalytic cleavage between the P1 and P2 regions, which is the first cleavage occurring in the polyprotein. Also cleaves the host translation initiation factor EIF4G1, in order to shut down the capped cellular mRNA translation. Inhibits the host nucleus-cytoplasm protein and RNA trafficking by cleaving host members of the nuclear pores. Counteracts stress granule formation probably by antagonizing its assembly or promoting its dissassembly. Cleaves and inhibits host IFIH1/MDA5, thereby inhibiting the type-I IFN production and the establishment of the antiviral state. Cleaves and inhibits host MAVS, thereby inhibiting the type-I IFN production and the establishment of the antiviral state. Plays an essential role in the virus replication cycle by acting as a viroporin. Creates a pore in the host endoplasmic reticulum and as a consequence releases Ca2+ in the cytoplasm of infected cell. In turn, high levels of cytoplasmic calcium may trigger membrane trafficking and transport of viral ER-associated proteins to viroplasms, sites of viral genome replication. In terms of biological role, induces and associates with structural rearrangements of intracellular membranes. Displays RNA-binding, nucleotide binding and NTPase activities. May play a role in virion morphogenesis and viral RNA encapsidation by interacting with the capsid protein VP3. Functionally, localizes the viral replication complex to the surface of membranous vesicles. Together with protein 3CD binds the Cis-Active RNA Element (CRE) which is involved in RNA synthesis initiation. Acts as a cofactor to stimulate the activity of 3D polymerase, maybe through a nucleid acid chaperone activity. Its function is as follows. Localizes the viral replication complex to the surface of membranous vesicles. It inhibits host cell endoplasmic reticulum-to-Golgi apparatus transport and causes the disassembly of the Golgi complex, possibly through GBF1 interaction. This would result in depletion of MHC, trail receptors and IFN receptors at the host cell surface. Plays an essential role in viral RNA replication by recruiting ACBD3 and PI4KB at the viral replication sites, thereby allowing the formation of the rearranged membranous structures where viral replication takes place. Acts as a primer for viral RNA replication and remains covalently bound to viral genomic RNA. VPg is uridylylated prior to priming replication into VPg-pUpU. The oriI viral genomic sequence may act as a template for this. The VPg-pUpU is then used as primer on the genomic RNA poly(A) by the RNA-dependent RNA polymerase to replicate the viral genome. During genome replication, the VPg-RNA linkage is removed by the host TDP2, thereby accelerating replication. During the late stage of the replication cycle, host TDP2 is excluded from sites of viral RNA synthesis and encapsidation, allowing for the generation of progeny virions. In terms of biological role, involved in the viral replication complex and viral polypeptide maturation. It exhibits protease activity with a specificity and catalytic efficiency that is different from protease 3C. Protein 3CD lacks polymerase activity. Protein 3CD binds to the 5'UTR of the viral genome. Functionally, major viral protease that mediates proteolytic processing of the polyprotein. Cleaves host EIF5B, contributing to host translation shutoff. Also cleaves host PABPC1, contributing to host translation shutoff. Cleaves and inhibits host RIGI, thereby inhibiting the type-I IFN production and the establishment of the antiviral state. Cleaves and inhibits host MAVS, thereby inhibiting the type-I IFN production and the establishment of the antiviral state. Cleaves and inhibits host TICAM1/TRIF, thereby inhibiting the type-I IFN production. Cleaves host NLRP1, triggers host N-glycine-mediated degradation of the autoinhibitory NLRP1 N-terminal fragment. Its function is as follows. Replicates the viral genomic RNA on the surface of intracellular membranes. May form linear arrays of subunits that propagate along a strong head-to-tail interaction called interface-I. Covalently attaches UMP to a tyrosine of VPg, which is used to prime RNA synthesis. The positive stranded RNA genome is first replicated at virus induced membranous vesicles, creating a dsRNA genomic replication form. This dsRNA is then used as template to synthesize positive stranded RNA genomes. ss(+)RNA genomes are either translated, replicated or encapsidated. In Homo sapiens (Human), this protein is Genome polyprotein.